Reading from the N-terminus, the 193-residue chain is Translocation protein SEC72 (193 aa).

In terms of assembly, component of the heterotetrameric Sec62/63complex composed of SEC62, SEC63, SEC71 and SEC72. The Sec62/63 complex associates with the Sec61 complex to form the Sec complex. May interact with protein YLR301W. Part of a complex consisting of KAR2, SEC63, SEC66 and SEC72.

It is found in the cytoplasm. Functionally, acts as a non-essential component of the Sec62/63 complex which is involved in SRP-independent post-translational translocation across the endoplasmic reticulum (ER) and functions together with the Sec61 complex and KAR2 in a channel-forming translocon complex. A cycle of assembly and disassembly of Sec62/63 complex from SEC61 may govern the activity of the translocon. SEC72 may be involved in signal peptide recognition for a defined subset of leader peptides, or may increase the efficiency of unusual or 'difficult' secretory precursors to the translocation pore, it may be that this protein binds charged leader peptides to the membrane until they engage the translocation apparatus. The sequence is that of Translocation protein SEC72 (SEC72) from Saccharomyces cerevisiae (strain ATCC 204508 / S288c) (Baker's yeast).